Reading from the N-terminus, the 163-residue chain is NADH-quinone oxidoreductase subunit I (163 aa).

4Fe-4S ferredoxin-type domains lie at 54 to 84 (LRRY…IDAE) and 94 to 123 (TRYD…EGPN). Positions 64, 67, 70, 74, 103, 106, 109, and 113 each coordinate [4Fe-4S] cluster.

This sequence belongs to the complex I 23 kDa subunit family. In terms of assembly, NDH-1 is composed of at least 14 different subunits, Nqo1 to Nqo14. The complex has a L-shaped structure, with the hydrophobic arm (subunits Nqo7, Nqo8, Nqo10 to Nqo14) embedded in the inner membrane and the hydrophilic peripheral arm (subunits Nqo1 to Nqo6, Nqo9) protruding into the bacterial cytoplasm. The hydrophilic domain contains all the redox centers. NADH-quinone oxidoreductase forms a supercomplex with ubiquinol-cytochrome c reductase complex (complex III or cytochrome b-c1 complex) and cytochrome c oxidase (complex IV), which stabilizes the NADH-quinone oxidoreductase complex. [4Fe-4S] cluster is required as a cofactor.

It is found in the cell inner membrane. It catalyses the reaction a quinone + NADH + 5 H(+)(in) = a quinol + NAD(+) + 4 H(+)(out). In terms of biological role, NDH-1 shuttles electrons from NADH, via FMN and iron-sulfur (Fe-S) centers, to quinones in the respiratory chain. The immediate electron acceptor for the enzyme in this species is believed to be ubiquinone. Couples the redox reaction to proton translocation (for every two electrons transferred, four hydrogen ions are translocated across the cytoplasmic membrane), and thus conserves the redox energy in a proton gradient. This is NADH-quinone oxidoreductase subunit I from Paracoccus denitrificans (strain Pd 1222).